The sequence spans 157 residues: Small ribosomal subunit protein uS7 (157 aa).

This sequence belongs to the universal ribosomal protein uS7 family. As to quaternary structure, part of the 30S ribosomal subunit. Contacts proteins S9 and S11.

In terms of biological role, one of the primary rRNA binding proteins, it binds directly to 16S rRNA where it nucleates assembly of the head domain of the 30S subunit. Is located at the subunit interface close to the decoding center, probably blocks exit of the E-site tRNA. This is Small ribosomal subunit protein uS7 from Caldicellulosiruptor saccharolyticus (strain ATCC 43494 / DSM 8903 / Tp8T 6331).